Reading from the N-terminus, the 949-residue chain is Glycine dehydrogenase (decarboxylating) (949 aa).

Lysine 700 carries the post-translational modification N6-(pyridoxal phosphate)lysine.

It belongs to the GcvP family. The glycine cleavage system is composed of four proteins: P, T, L and H. Requires pyridoxal 5'-phosphate as cofactor.

The enzyme catalyses N(6)-[(R)-lipoyl]-L-lysyl-[glycine-cleavage complex H protein] + glycine + H(+) = N(6)-[(R)-S(8)-aminomethyldihydrolipoyl]-L-lysyl-[glycine-cleavage complex H protein] + CO2. Its function is as follows. The glycine cleavage system catalyzes the degradation of glycine. The P protein binds the alpha-amino group of glycine through its pyridoxal phosphate cofactor; CO(2) is released and the remaining methylamine moiety is then transferred to the lipoamide cofactor of the H protein. The sequence is that of Glycine dehydrogenase (decarboxylating) from Christiangramia forsetii (strain DSM 17595 / CGMCC 1.15422 / KT0803) (Gramella forsetii).